The chain runs to 82 residues: Precursor of CEP3 (82 aa).

The first 24 residues, 1–24 (MATINVYVFAFIFLLTISVGSIEG), serve as a signal peptide directing secretion. A propeptide spanning residues 25–63 (RKLTKFTVTTSEEIRAGGSVLSSSPPTEPLESPPSHGVD) is cleaved from the precursor. The disordered stretch occupies residues 40–82 (AGGSVLSSSPPTEPLESPPSHGVDTFRPTEPGHSPGIGHSVHN). Pro-67, Pro-70, and Pro-74 each carry hydroxyproline. The propeptide occupies 79-82 (SVHN).

This sequence belongs to the C-terminally encoded plant signaling peptide (CEP) family. As to quaternary structure, interacts with the CEP receptor CEPR1. Post-translationally, the mature small signaling peptide is generated by proteolytic processing of the longer precursor. As to expression, mostly expressed in roots. Present in lateral roots (especially in vasculature), root-hypocotyl junction and cotyledons.

The protein localises to the secreted. It localises to the extracellular space. Its subcellular location is the apoplast. Functionally, extracellular signaling peptide that represses primary root growth rate and significantly inhibits lateral root formation. Promotes shoot growth. Modulates leaf morphology. Regulates systemic nitrogen (N)-demand signaling. Mediates systemic up-regulation of genes involved in N uptake and assimilation pathways. This Arabidopsis thaliana (Mouse-ear cress) protein is Precursor of CEP3.